The chain runs to 788 residues: Leucine-rich repeat and fibronectin type-III domain-containing protein 2 (788 aa).

A signal peptide spans 1–20 (METLLGGLLAFGMAFAVVDA). Residues 21 to 52 (CPKYCVCQNLSESLGTLCPSKGLLFVPPDIDR) enclose the LRRNT domain. At 21 to 534 (CPKYCVCQNL…MHSQILGGTM (514 aa)) the chain is on the extracellular side. Residues Asn-29 and Asn-74 are each glycosylated (N-linked (GlcNAc...) asparagine). LRR repeat units follow at residues 53 to 74 (RTVELRLGGNFIIHIGRQDFAN), 77 to 98 (GLVDLTLSRNTISHIQPFSFLD), 101 to 122 (SLRSLHLDSNRLPSLGEDTLRG), 125 to 146 (NLQHLIVNNNQLGGIADDAFED), 150 to 171 (TLEDLDLSYNNLHGLPWDSVRR), 174 to 195 (NLHQLSLDHNLLDHIAEGTFAD), and 198 to 219 (KLARLDLTSNRLQKLPPDPIFA). Residues 242–288 (NPLHCNCELLWLRRLERDDDLKTCGSPGGLKGRYFWHIREEEFVCEP) form the LRRCT domain. Residues 289–375 (PLITQHTHKL…GEATATVEVS (87 aa)) enclose the Ig-like domain. Cysteines 310 and 359 form a disulfide. Asn-332, Asn-341, Asn-384, and Asn-457 each carry an N-linked (GlcNAc...) asparagine glycan. The tract at residues 383–423 (SNSTSRMAPPKSRLSDITGSSKTSRGGGGSGAGEPPKSTPE) is disordered. Residues 422–518 (PERAVLVSDV…GCAQFFTKAD (97 aa)) enclose the Fibronectin type-III domain. Residues 535 to 555 (ILVIGGIIVATLLVFIVILMV) form a helical membrane-spanning segment. Residues 556–788 (RYKVCNHDAP…SSEWVMESTV (233 aa)) lie on the Cytoplasmic side of the membrane. Positions 620–641 (CDSSSSSSLGSGEAAGLSRGPW) are enriched in low complexity. Disordered stretches follow at residues 620 to 655 (CDSSSSSSLGSGEAAGLSRGPWRLPPPAPRPKPSLD) and 668 to 707 (SQRKEELLDSRTPAGRGAGTSARGHHSDREPLLGPPATRA). Pro residues predominate over residues 642–651 (RLPPPAPRPK). The short motif at 785–788 (ESTV) is the PDZ-binding element.

Belongs to the LRFN family. Forms heteromeric complexes with LRFN1, LRFN3 and LRFN4. Can form homomeric complexes, but not across cell junctions. Can form heteromeric complexes with LRFN5. Interacts with DLG1, DLG3 and DLG4; interaction with DLG4 is mediated by the PDZ-binding domain. Also interacts with DLG2. Interacts with 2 NMDA receptor subunits GRIN1 and GRIN2A.

Its subcellular location is the membrane. The protein localises to the synapse. It is found in the postsynaptic cell membrane. Its function is as follows. Promotes neurite outgrowth in hippocampal neurons. Enhances the cell surface expression of GRIN1 and GRIN2A NMDA receptor subunits. May play a role in redistributing DLG4 to the cell periphery. The polypeptide is Leucine-rich repeat and fibronectin type-III domain-containing protein 2 (Lrfn2) (Rattus norvegicus (Rat)).